The following is a 160-amino-acid chain: Deoxyuridine 5'-triphosphate nucleotidohydrolase (160 aa).

Substrate contacts are provided by residues 72–74, Asn85, and 89–91; these read RSG and TID.

This sequence belongs to the dUTPase family. Mg(2+) is required as a cofactor.

It carries out the reaction dUTP + H2O = dUMP + diphosphate + H(+). It functions in the pathway pyrimidine metabolism; dUMP biosynthesis; dUMP from dCTP (dUTP route): step 2/2. Functionally, this enzyme is involved in nucleotide metabolism: it produces dUMP, the immediate precursor of thymidine nucleotides and it decreases the intracellular concentration of dUTP so that uracil cannot be incorporated into DNA. This chain is Deoxyuridine 5'-triphosphate nucleotidohydrolase, found in Methylocella silvestris (strain DSM 15510 / CIP 108128 / LMG 27833 / NCIMB 13906 / BL2).